The sequence spans 1022 residues: Probable E3 ubiquitin-protein ligase HERC6 (1022 aa).

5 RCC1 repeats span residues 41 to 92 (NHRV…AVCH), 93 to 145 (KGRV…ALSK), 147 to 198 (SQVF…ALSL), 200 to 253 (GTSF…VLTQ), and 254 to 304 (DGKV…AYVH). Positions 693–1017 (EATDFCKVLV…INNNRGFVSP (325 aa)) constitute an HECT domain. The active-site Glycyl thioester intermediate is cysteine 985.

Detected in brain, heart, placenta and testis.

The protein resides in the cytoplasm. Its subcellular location is the cytosol. The enzyme catalyses S-ubiquitinyl-[E2 ubiquitin-conjugating enzyme]-L-cysteine + [acceptor protein]-L-lysine = [E2 ubiquitin-conjugating enzyme]-L-cysteine + N(6)-ubiquitinyl-[acceptor protein]-L-lysine.. The protein operates within protein modification; protein ubiquitination. Its function is as follows. E3 ubiquitin-protein ligase which accepts ubiquitin from an E2 ubiquitin-conjugating enzyme in the form of a thioester and then directly transfers the ubiquitin to targeted substrates. The protein is Probable E3 ubiquitin-protein ligase HERC6 (HERC6) of Homo sapiens (Human).